The sequence spans 299 residues: Taste receptor type 2 member 1 (299 aa).

The Extracellular portion of the chain corresponds to 1–9 (MLESHLIIH). The helical transmembrane segment at 10-30 (FLLAVIQFLLGTFTNGIIVVV) threads the bilayer. Over 31-55 (NGIDLIKHRKMAPLDLLLSCLAVSR) the chain is Cytoplasmic. Residues 56 to 76 (IFLQLFIFYVNVIVIFFIEFI) traverse the membrane as a helical segment. At 77 to 81 (MCSEN) the chain is on the extracellular side. The helical transmembrane segment at 82-102 (CAILLFINELELWLATWLGVF) threads the bilayer. Residues 103–124 (YCAKVASVPHPLFIWLKMKISK) are Cytoplasmic-facing. A helical transmembrane segment spans residues 125–145 (LVPWMILGSLLYVSMTCVFHS). Over 146–178 (KYAGFMVPYFLRNFFSQNATIQKEDTPAIQIFS) the chain is Extracellular. N-linked (GlcNAc...) asparagine glycosylation is present at asparagine 163. A helical transmembrane segment spans residues 179–199 (FVAEFLVPLLIFLVAVLLLIF). Topologically, residues 200–222 (SLGRHTRQMRNTVAGSRVPGRGA) are cytoplasmic. The chain crosses the membrane as a helical span at residues 223–243 (PISALLSILSFVILYFSHCMI). Over 244 to 257 (KVFLSSLKFHVRSF) the chain is Extracellular. Residues 258–278 (ILPFFILVIGIYPSGHSLILI) form a helical membrane-spanning segment. Residues 279–299 (LGNXKLKQNAKKFLLHSKCCQ) lie on the Cytoplasmic side of the membrane.

It belongs to the G-protein coupled receptor T2R family.

It localises to the membrane. Functionally, receptor that may play a role in the perception of bitterness and is gustducin-linked. May play a role in sensing the chemical composition of the gastrointestinal content. The activity of this receptor may stimulate alpha gustducin, mediate PLC-beta-2 activation and lead to the gating of TRPM5. This chain is Taste receptor type 2 member 1 (TAS2R1), found in Pongo pygmaeus (Bornean orangutan).